The sequence spans 98 residues: Large ribosomal subunit protein uL23c (98 aa).

The protein belongs to the universal ribosomal protein uL23 family. As to quaternary structure, part of the 50S ribosomal subunit.

It localises to the plastid. The protein localises to the chloroplast. Functionally, binds to 23S rRNA. The protein is Large ribosomal subunit protein uL23c (rpl23) of Thalassiosira pseudonana (Marine diatom).